The primary structure comprises 318 residues: NADH-ubiquinone oxidoreductase chain 1 (318 aa).

The next 8 membrane-spanning stretches (helical) occupy residues 2 to 22, 68 to 88, 100 to 120, 147 to 167, 171 to 191, 217 to 237, 254 to 273, and 294 to 314; these read FMLN…FLTL, ITMF…MWIP, LGVL…LWSG, AIIL…TLII, YIWL…STLA, GGPF…MNAL, LYTT…FLWI, and LPLT…MAGI.

Belongs to the complex I subunit 1 family.

The protein localises to the mitochondrion inner membrane. The catalysed reaction is a ubiquinone + NADH + 5 H(+)(in) = a ubiquinol + NAD(+) + 4 H(+)(out). Core subunit of the mitochondrial membrane respiratory chain NADH dehydrogenase (Complex I) that is believed to belong to the minimal assembly required for catalysis. Complex I functions in the transfer of electrons from NADH to the respiratory chain. The immediate electron acceptor for the enzyme is believed to be ubiquinone. The polypeptide is NADH-ubiquinone oxidoreductase chain 1 (MT-ND1) (Hsunycteris thomasi (Thomas's nectar bat)).